Here is a 1058-residue protein sequence, read N- to C-terminus: Carbamoyl phosphate synthase large chain (1058 aa).

The tract at residues M1–E401 is carboxyphosphate synthetic domain. ATP-binding residues include R129, R169, G175, G176, R208, I210, E215, G241, I242, H243, Q284, and E298. Residues K133–V327 form the ATP-grasp 1 domain. Residues Q284, E298, and N300 each contribute to the Mg(2+) site. Positions 284, 298, and 300 each coordinate Mn(2+). Residues I402–S546 are oligomerization domain. The interval I547–Y929 is carbamoyl phosphate synthetic domain. Residues E671–L861 enclose the ATP-grasp 2 domain. R707, S746, I748, E752, G777, V778, H779, S780, Q820, and E832 together coordinate ATP. Q820, E832, and N834 together coordinate Mg(2+). Positions 820, 832, and 834 each coordinate Mn(2+). Residues L930–I1058 form the MGS-like domain. Positions L930 to I1058 are allosteric domain.

It belongs to the CarB family. Composed of two chains; the small (or glutamine) chain promotes the hydrolysis of glutamine to ammonia, which is used by the large (or ammonia) chain to synthesize carbamoyl phosphate. Tetramer of heterodimers (alpha,beta)4. It depends on Mg(2+) as a cofactor. Mn(2+) serves as cofactor.

The enzyme catalyses hydrogencarbonate + L-glutamine + 2 ATP + H2O = carbamoyl phosphate + L-glutamate + 2 ADP + phosphate + 2 H(+). It carries out the reaction hydrogencarbonate + NH4(+) + 2 ATP = carbamoyl phosphate + 2 ADP + phosphate + 2 H(+). The protein operates within amino-acid biosynthesis; L-arginine biosynthesis; carbamoyl phosphate from bicarbonate: step 1/1. Its pathway is pyrimidine metabolism; UMP biosynthesis via de novo pathway; (S)-dihydroorotate from bicarbonate: step 1/3. Its function is as follows. Large subunit of the glutamine-dependent carbamoyl phosphate synthetase (CPSase). CPSase catalyzes the formation of carbamoyl phosphate from the ammonia moiety of glutamine, carbonate, and phosphate donated by ATP, constituting the first step of 2 biosynthetic pathways, one leading to arginine and/or urea and the other to pyrimidine nucleotides. The large subunit (synthetase) binds the substrates ammonia (free or transferred from glutamine from the small subunit), hydrogencarbonate and ATP and carries out an ATP-coupled ligase reaction, activating hydrogencarbonate by forming carboxy phosphate which reacts with ammonia to form carbamoyl phosphate. The sequence is that of Carbamoyl phosphate synthase large chain from Streptococcus equi subsp. equi (strain 4047).